The sequence spans 301 residues: uncharacterized protein (301 aa).

It belongs to the asfivirus E301R family. As to quaternary structure, interacts with host IRF3.

Functionally, plays a role in the inhibition of host innate immune system by acting as a negatively regulator of type I interferon production. Mechanistically, interacts with and prevents host IRF3 nuclear localization to inhibit its transcriptional activity. This is an uncharacterized protein from African swine fever virus (strain Badajoz 1971 Vero-adapted) (Ba71V).